The primary structure comprises 328 residues: Phosphate acyltransferase (328 aa).

It belongs to the PlsX family. Homodimer. Probably interacts with PlsY.

The protein resides in the cytoplasm. It carries out the reaction a fatty acyl-[ACP] + phosphate = an acyl phosphate + holo-[ACP]. The protein operates within lipid metabolism; phospholipid metabolism. Functionally, catalyzes the reversible formation of acyl-phosphate (acyl-PO(4)) from acyl-[acyl-carrier-protein] (acyl-ACP). This enzyme utilizes acyl-ACP as fatty acyl donor, but not acyl-CoA. This chain is Phosphate acyltransferase, found in Campylobacter jejuni subsp. jejuni serotype O:6 (strain 81116 / NCTC 11828).